A 24-amino-acid chain; its full sequence is Probable caffeoyl-CoA O-methyltransferase (24 aa).

Belongs to the class I-like SAM-binding methyltransferase superfamily. Cation-dependent O-methyltransferase family. CCoAMT subfamily. It depends on a divalent metal cation as a cofactor.

The catalysed reaction is (E)-caffeoyl-CoA + S-adenosyl-L-methionine = (E)-feruloyl-CoA + S-adenosyl-L-homocysteine + H(+). It participates in aromatic compound metabolism; phenylpropanoid biosynthesis. Methylates caffeoyl-CoA to feruloyl-CoA and 5-hydroxyferuloyl-CoA to sinapoyl-CoA. Plays a role in the synthesis of feruloylated polysaccharides. Involved in the reinforcement of the plant cell wall. Also involved in the responding to wounding or pathogen challenge by the increased formation of cell wall-bound ferulic acid polymers. The sequence is that of Probable caffeoyl-CoA O-methyltransferase from Pinus pinaster (Maritime pine).